A 337-amino-acid polypeptide reads, in one-letter code: Anthranilate phosphoribosyltransferase (337 aa).

5-phospho-alpha-D-ribose 1-diphosphate contacts are provided by residues Gly-78, 81 to 82 (GD), Thr-86, 88 to 91 (NIST), 106 to 114 (KHGNRSVSS), and Ser-118. Gly-78 serves as a coordination point for anthranilate. Ser-90 contacts Mg(2+). Position 109 (Asn-109) interacts with anthranilate. Arg-164 provides a ligand contact to anthranilate. Residues Asp-222 and Glu-223 each contribute to the Mg(2+) site.

It belongs to the anthranilate phosphoribosyltransferase family. In terms of assembly, homodimer. It depends on Mg(2+) as a cofactor.

It carries out the reaction N-(5-phospho-beta-D-ribosyl)anthranilate + diphosphate = 5-phospho-alpha-D-ribose 1-diphosphate + anthranilate. Its pathway is amino-acid biosynthesis; L-tryptophan biosynthesis; L-tryptophan from chorismate: step 2/5. Its function is as follows. Catalyzes the transfer of the phosphoribosyl group of 5-phosphorylribose-1-pyrophosphate (PRPP) to anthranilate to yield N-(5'-phosphoribosyl)-anthranilate (PRA). The protein is Anthranilate phosphoribosyltransferase of Idiomarina loihiensis (strain ATCC BAA-735 / DSM 15497 / L2-TR).